The sequence spans 409 residues: Tryptophan synthase beta chain (409 aa).

N6-(pyridoxal phosphate)lysine is present on Lys-100.

It belongs to the TrpB family. In terms of assembly, tetramer of two alpha and two beta chains. Requires pyridoxal 5'-phosphate as cofactor.

It catalyses the reaction (1S,2R)-1-C-(indol-3-yl)glycerol 3-phosphate + L-serine = D-glyceraldehyde 3-phosphate + L-tryptophan + H2O. It participates in amino-acid biosynthesis; L-tryptophan biosynthesis; L-tryptophan from chorismate: step 5/5. The beta subunit is responsible for the synthesis of L-tryptophan from indole and L-serine. The chain is Tryptophan synthase beta chain from Pyrobaculum arsenaticum (strain DSM 13514 / JCM 11321 / PZ6).